The primary structure comprises 222 residues: ATP-dependent dethiobiotin synthetase BioD (222 aa).

12 to 17 contacts ATP; that stretch reads DAGKTV. Residue threonine 16 participates in Mg(2+) binding. Lysine 37 is an active-site residue. Serine 41 lines the substrate pocket. Residues aspartate 54, 116–119, 176–177, 206–208, and glutamate 213 each bind ATP; these read EGAG, VQ, and PYL. Mg(2+)-binding residues include aspartate 54 and glutamate 116.

The protein belongs to the dethiobiotin synthetase family. Homodimer. The cofactor is Mg(2+).

The protein resides in the cytoplasm. It catalyses the reaction (7R,8S)-7,8-diammoniononanoate + CO2 + ATP = (4R,5S)-dethiobiotin + ADP + phosphate + 3 H(+). It participates in cofactor biosynthesis; biotin biosynthesis; biotin from 7,8-diaminononanoate: step 1/2. Catalyzes a mechanistically unusual reaction, the ATP-dependent insertion of CO2 between the N7 and N8 nitrogen atoms of 7,8-diaminopelargonic acid (DAPA, also called 7,8-diammoniononanoate) to form a ureido ring. The chain is ATP-dependent dethiobiotin synthetase BioD from Idiomarina loihiensis (strain ATCC BAA-735 / DSM 15497 / L2-TR).